Consider the following 390-residue polypeptide: Pre-mycofactocin synthase (390 aa).

The 383-residue stretch at 1-383 folds into the FMN hydroxy acid dehydrogenase domain; it reads MADEWFETVA…RSDDILIPAD (383 aa). 4 residues coordinate FMN: serine 108, glutamine 128, threonine 156, and lysine 254. Histidine 278 (proton acceptor) is an active-site residue. FMN-binding positions include 309 to 313 and 332 to 333; these read DGGIR and GR.

Belongs to the FMN-dependent alpha-hydroxy acid dehydrogenase family. It depends on FMN as a cofactor.

It carries out the reaction 3-amino-5-[(4-hydroxyphenyl)methyl]-4,4-dimethyl-2-pyrrolidin-2-one + O2 + H2O = pre-mycofactocin + H2O2 + NH4(+). Involved in the biosynthesis of the enzyme cofactor mycofactocin (MFT). Catalyzes the oxidative deamination of AHDP (3-amino-5-[(4-hydroxyphenyl)methyl]-4,4-dimethyl-2-pyrrolidin-2-one), forming an alpha-keto amide moiety on the resulting molecule, which is called pre-mycofactocin (PMFT). This reaction occurs via a 5-[(4-hydroxyphenyl)methyl]-3-imino-4,4-dimethylpyrrolidin-2-one intermediate, which converts to PMFT. The alpha-keto amide moiety is the redox-active center for the redox activity of mycofactocin. This Mycobacterium ulcerans (strain Agy99) protein is Pre-mycofactocin synthase.